The chain runs to 434 residues: Trigger factor 2 (434 aa).

In terms of domain architecture, PPIase FKBP-type spans 164–247 (GDTVTVDYDC…VKKVERIEIL (84 aa)).

Belongs to the FKBP-type PPIase family. Tig subfamily.

It localises to the cytoplasm. It catalyses the reaction [protein]-peptidylproline (omega=180) = [protein]-peptidylproline (omega=0). Functionally, involved in protein export. Acts as a chaperone by maintaining the newly synthesized protein in an open conformation. Functions as a peptidyl-prolyl cis-trans isomerase. This Desulfitobacterium hafniense (strain Y51) protein is Trigger factor 2.